We begin with the raw amino-acid sequence, 364 residues long: Triacylglycerol lipase (364 aa).

The first 44 residues, 1 to 44 (MARTMRSRVVAGAVACAMSIAPFAGTTAVMTLATTHAAMAATAP), serve as a signal peptide directing secretion. Residues 54 to 333 (PIILVHGLSG…TSYKWNHLDE (280 aa)) form the AB hydrolase-1 domain. Residue Leu-61 coordinates substrate. Ser-131 acts as the Nucleophile in catalysis. Gln-132 serves as a coordination point for substrate. Cys-234 and Cys-314 form a disulfide bridge. Asp-286 is a binding site for Ca(2+). Catalysis depends on charge relay system residues Asp-308 and His-330. Positions 332, 336, and 340 each coordinate Ca(2+).

This sequence belongs to the AB hydrolase superfamily. Pseudomonas lipase family. As to quaternary structure, monomer. The cofactor is Ca(2+).

It is found in the secreted. It carries out the reaction a triacylglycerol + H2O = a diacylglycerol + a fatty acid + H(+). In terms of biological role, catalyzes the hydrolysis of triacylglycerol. The polypeptide is Triacylglycerol lipase (Pseudomonas sp. (strain KWI-56)).